A 219-amino-acid chain; its full sequence is Zinc finger C2HC domain-containing protein 1B (219 aa).

2 consecutive C2HC/C3H-type zinc fingers follow at residues E14–K43 and D117–R146. The Zn(2+) site is built by C18, C21, H33, C37, C121, C124, H136, and C140. The tract at residues E190–D219 is disordered.

The protein belongs to the ZC2HC1 family. Zn(2+) is required as a cofactor.

This is Zinc finger C2HC domain-containing protein 1B (ZC2HC1B) from Bos taurus (Bovine).